The sequence spans 412 residues: Glucose-1-phosphate adenylyltransferase (412 aa).

Alpha-D-glucose 1-phosphate contacts are provided by residues Gly-163, 179–180 (EK), and Ser-197.

This sequence belongs to the bacterial/plant glucose-1-phosphate adenylyltransferase family. In terms of assembly, homotetramer.

It catalyses the reaction alpha-D-glucose 1-phosphate + ATP + H(+) = ADP-alpha-D-glucose + diphosphate. The protein operates within glycan biosynthesis; glycogen biosynthesis. Involved in the biosynthesis of ADP-glucose, a building block required for the elongation reactions to produce glycogen. Catalyzes the reaction between ATP and alpha-D-glucose 1-phosphate (G1P) to produce pyrophosphate and ADP-Glc. The protein is Glucose-1-phosphate adenylyltransferase of Frankia casuarinae (strain DSM 45818 / CECT 9043 / HFP020203 / CcI3).